The chain runs to 124 residues: Fluoride-specific ion channel FluC (124 aa).

4 helical membrane-spanning segments follow: residues 4–24 (LLLVALGGSIGAVFRYLISIF), 35–55 (FGTLLVNVLGSFLMGVIYALG), 60–80 (ISPEFKALIGVGLLGALTTFS), and 102–122 (VVLNLSLCLFMVYLGQQLVFS). Gly74 and Thr77 together coordinate Na(+).

The protein belongs to the fluoride channel Fluc/FEX (TC 1.A.43) family.

The protein resides in the cell inner membrane. The enzyme catalyses fluoride(in) = fluoride(out). Na(+) is not transported, but it plays an essential structural role and its presence is essential for fluoride channel function. Functionally, fluoride-specific ion channel. Important for reducing fluoride concentration in the cell, thus reducing its toxicity. The chain is Fluoride-specific ion channel FluC from Shewanella oneidensis (strain ATCC 700550 / JCM 31522 / CIP 106686 / LMG 19005 / NCIMB 14063 / MR-1).